The chain runs to 69 residues: MEAIDSAIDPLRDFAKSSVRLVQRCHKPDRKEFTKVAVRTAIGFVVMGFVGFFVKLVFIPINNIIVGSS.

N-acetylmethionine is present on Met1. Over 1–32 (MEAIDSAIDPLRDFAKSSVRLVQRCHKPDRKE) the chain is Cytoplasmic. A helical membrane pass occupies residues 33–61 (FTKVAVRTAIGFVVMGFVGFFVKLVFIPI). The Extracellular portion of the chain corresponds to 62–69 (NNIIVGSS).

Belongs to the SecE/SEC61-gamma family. In terms of assembly, heterotrimeric complex composed of SEC61-alpha, SEC61-beta and SEC61-gamma.

It localises to the endoplasmic reticulum membrane. Its function is as follows. Necessary for protein translocation in the endoplasmic reticulum. This is Protein transport protein Sec61 subunit gamma-3 (SEC61G3) from Arabidopsis thaliana (Mouse-ear cress).